A 428-amino-acid chain; its full sequence is Adenylosuccinate synthetase (428 aa).

Residues 12-18 (GDEGKGK) and 40-42 (GHT) contribute to the GTP site. The active-site Proton acceptor is Asp13. Mg(2+) contacts are provided by Asp13 and Gly40. IMP is bound by residues 13 to 16 (DEGK), 38 to 41 (NAGH), Thr129, Arg143, Gln224, Thr239, and Arg303. His41 (proton donor) is an active-site residue. 299–305 (VTTGRIR) contributes to the substrate binding site. GTP-binding positions include Arg305, 331–333 (KVD), and 410–412 (AYG).

Belongs to the adenylosuccinate synthetase family. In terms of assembly, homodimer. It depends on Mg(2+) as a cofactor.

It localises to the cytoplasm. The catalysed reaction is IMP + L-aspartate + GTP = N(6)-(1,2-dicarboxyethyl)-AMP + GDP + phosphate + 2 H(+). It participates in purine metabolism; AMP biosynthesis via de novo pathway; AMP from IMP: step 1/2. Functionally, plays an important role in the de novo pathway of purine nucleotide biosynthesis. Catalyzes the first committed step in the biosynthesis of AMP from IMP. In Francisella tularensis subsp. tularensis (strain FSC 198), this protein is Adenylosuccinate synthetase.